We begin with the raw amino-acid sequence, 503 residues long: Putative FBD-associated F-box protein At5g56410 (503 aa).

The F-box domain maps to 2 to 50 (DKITGFSDDELLVKILSFLPTKAAVTTSILSKQWKFLWMRLPKLEYHDD). Positions 361–412 (FWEQMITSVPQCLLSSLQTFKWLGNGDSIEGKDLATFILRNSCQLKTATISI) constitute an FBD domain.

The protein is Putative FBD-associated F-box protein At5g56410 of Arabidopsis thaliana (Mouse-ear cress).